A 414-amino-acid chain; its full sequence is Methyltransferase-like protein 2 (414 aa).

Residues 56–77 (LNQHSSESNPKKRKRKQKNSSF) form a disordered region.

Belongs to the MT-A70-like family.

In terms of biological role, probable methyltransferase. This is Methyltransferase-like protein 2 from Arabidopsis thaliana (Mouse-ear cress).